Reading from the N-terminus, the 1366-residue chain is Protein strawberry notch homolog 2 (1366 aa).

4 disordered regions span residues 1-24 (MLAVGPAMDRDYPQHEPPPAGSLL), 174-217 (QEQS…KQHP), 614-640 (STKRKRDRGAGSKRKRRPRGRGAKAPR), and 1324-1366 (HAGP…QAPL). The segment covering 15 to 24 (HEPPPAGSLL) has biased composition (pro residues). Acidic residues predominate over residues 182 to 194 (PEEEDEAEEEEAE). The segment covering 614–637 (STKRKRDRGAGSKRKRRPRGRGAK) has biased composition (basic residues). A compositionally biased stretch (gly residues) spans 1333-1347 (LGEGAGAGGAAGGGP).

The protein belongs to the SBNO family. As to quaternary structure, interacts with TAL1; this interaction inhibits TAL1 occupancy of the DCSTAMP promoter, leading to the activation of the DCSTAMP promoter by the transcription factor MITF. In terms of tissue distribution, detected in macrophages. IL10 regulates expression in a STAT3-dependent way.

Its function is as follows. Acts as a transcriptional coregulator, that can have both coactivator and corepressor functions. Inhibits the DCSTAMP-repressive activity of TAL1, hence enhancing the access of the transcription factor MITF to the DC-STAMP promoter in osteoclast. Plays a role in bone homeostasis; required as a positive regulator in TNFSF11//RANKL-mediated osteoclast fusion via a DCSTAMP-dependent pathway. May also be required in the regulation of osteoblast differentiation. Involved in the transcriptional corepression of NF-kappaB in macrophages. Plays a role as a regulator in the pro-inflammatory cascade. In Homo sapiens (Human), this protein is Protein strawberry notch homolog 2 (SBNO2).